The chain runs to 285 residues: Mitochondrial substrate carrier family protein L (285 aa).

Residues 1 to 13 (MIASKETKEKIRN) lie on the Mitochondrial intermembrane side of the membrane. Solcar repeat units follow at residues 8–94 (KEKI…VKSK), 103–185 (ISLG…AQRY), and 193–282 (MTMG…VMKF). The helical transmembrane segment at 14-34 (FIGGFASGAASTLAGHPFDTL) threads the bilayer. Residues 35–69 (KVRLQTEGSTGRFRGLAHCFTTTIKEEGFFALYKG) are Mitochondrial matrix-facing. Residues 70 to 90 (VTPPLLGMSIINSCMFGAMNI) traverse the membrane as a helical segment. Residues 91–102 (VKSKIHTDKSTP) lie on the Mitochondrial intermembrane side of the membrane. A helical transmembrane segment spans residues 103 to 123 (ISLGEIMVSGAITGWIVSFVA). Topologically, residues 124-156 (CPIETVKSKLQVQYTGVKLYNGPIDCIKKIGIR) are mitochondrial matrix. The chain crosses the membrane as a helical span at residues 157–177 (GLYKALIPTGFQRNSLYAYFG). Topologically, residues 178–198 (CYELAQRYLRREDGSMTMGRS) are mitochondrial intermembrane. The helical transmembrane segment at 199 to 219 (FIAGGIAGTGFWLTNFPFDVI) threads the bilayer. Residues 220–256 (RSRIMTMPYNESPPRYKGMIDCAKHIYRVDGLKGFWK) lie on the Mitochondrial matrix side of the membrane. The helical transmembrane segment at 257–277 (GFSPCLLRTFPANGATFVAYE) threads the bilayer. Topologically, residues 278 to 285 (CVMKFFPM) are mitochondrial intermembrane.

The protein belongs to the mitochondrial carrier (TC 2.A.29) family.

It localises to the mitochondrion inner membrane. In terms of biological role, mitochondrial solute carriers shuttle metabolites, nucleotides, and cofactors through the mitochondrial inner membrane. The sequence is that of Mitochondrial substrate carrier family protein L (mcfL) from Dictyostelium discoideum (Social amoeba).